The chain runs to 84 residues: Small ribosomal subunit protein bS20 (84 aa).

The protein belongs to the bacterial ribosomal protein bS20 family.

Functionally, binds directly to 16S ribosomal RNA. The sequence is that of Small ribosomal subunit protein bS20 from Limosilactobacillus reuteri (strain DSM 20016) (Lactobacillus reuteri).